Consider the following 160-residue polypeptide: Serine-protein kinase RsbW (160 aa).

The protein belongs to the anti-sigma-factor family.

The catalysed reaction is L-seryl-[protein] + ATP = O-phospho-L-seryl-[protein] + ADP + H(+). It carries out the reaction L-threonyl-[protein] + ATP = O-phospho-L-threonyl-[protein] + ADP + H(+). Functionally, negative regulator of sigma-B activity. Phosphorylates and inactivates its specific antagonist protein, RsbV. Upon phosphorylation of RsbV, RsbW is released and binds to sigma-B, thereby blocking its ability to form an RNA polymerase holoenzyme (E-sigma-B). In Bacillus cereus (strain AH187), this protein is Serine-protein kinase RsbW.